We begin with the raw amino-acid sequence, 197 residues long: Holliday junction branch migration complex subunit RuvA (197 aa).

The domain I stretch occupies residues 1 to 63 (MFEYLNGKLV…EDAHSLYGFV (63 aa)). A domain II region spans residues 64 to 142 (NESEKALFLR…ATGAVGISLL (79 aa)). Positions 142-146 (LDAAP) are flexible linker. Positions 147–197 (ASNLALEEAIEALQALGYKATELKKIEKKLAQEAGLTSEEYIKSALKLMMK) are domain III.

It belongs to the RuvA family. In terms of assembly, homotetramer. Forms an RuvA(8)-RuvB(12)-Holliday junction (HJ) complex. HJ DNA is sandwiched between 2 RuvA tetramers; dsDNA enters through RuvA and exits via RuvB. An RuvB hexamer assembles on each DNA strand where it exits the tetramer. Each RuvB hexamer is contacted by two RuvA subunits (via domain III) on 2 adjacent RuvB subunits; this complex drives branch migration. In the full resolvosome a probable DNA-RuvA(4)-RuvB(12)-RuvC(2) complex forms which resolves the HJ.

It is found in the cytoplasm. The RuvA-RuvB-RuvC complex processes Holliday junction (HJ) DNA during genetic recombination and DNA repair, while the RuvA-RuvB complex plays an important role in the rescue of blocked DNA replication forks via replication fork reversal (RFR). RuvA specifically binds to HJ cruciform DNA, conferring on it an open structure. The RuvB hexamer acts as an ATP-dependent pump, pulling dsDNA into and through the RuvAB complex. HJ branch migration allows RuvC to scan DNA until it finds its consensus sequence, where it cleaves and resolves the cruciform DNA. This chain is Holliday junction branch migration complex subunit RuvA, found in Lactococcus lactis subsp. cremoris (strain MG1363).